The chain runs to 245 residues: Orotidine 5'-phosphate decarboxylase (245 aa).

Substrate-binding positions include aspartate 22, lysine 44, 71–80 (DLKFHDIPNT), threonine 131, arginine 192, glutamine 201, glycine 221, and arginine 222. Residue lysine 73 is the Proton donor of the active site.

The protein belongs to the OMP decarboxylase family. Type 1 subfamily. In terms of assembly, homodimer.

The catalysed reaction is orotidine 5'-phosphate + H(+) = UMP + CO2. The protein operates within pyrimidine metabolism; UMP biosynthesis via de novo pathway; UMP from orotate: step 2/2. Functionally, catalyzes the decarboxylation of orotidine 5'-monophosphate (OMP) to uridine 5'-monophosphate (UMP). The sequence is that of Orotidine 5'-phosphate decarboxylase from Shigella flexneri.